A 268-amino-acid polypeptide reads, in one-letter code: Hydroxyethylthiazole kinase (268 aa).

Residue methionine 46 coordinates substrate. ATP-binding residues include arginine 122 and threonine 168. Glycine 195 contacts substrate.

It belongs to the Thz kinase family. Requires Mg(2+) as cofactor.

It catalyses the reaction 5-(2-hydroxyethyl)-4-methylthiazole + ATP = 4-methyl-5-(2-phosphooxyethyl)-thiazole + ADP + H(+). Its pathway is cofactor biosynthesis; thiamine diphosphate biosynthesis; 4-methyl-5-(2-phosphoethyl)-thiazole from 5-(2-hydroxyethyl)-4-methylthiazole: step 1/1. Catalyzes the phosphorylation of the hydroxyl group of 4-methyl-5-beta-hydroxyethylthiazole (THZ). The polypeptide is Hydroxyethylthiazole kinase (Desulfatibacillum aliphaticivorans).